We begin with the raw amino-acid sequence, 263 residues long: Eukaryotic translation initiation factor 3 subunit J-B (263 aa).

Acidic residues-rich tracts occupy residues 1–13 (MADSDEWDADNFE) and 30–50 (EGEDEEEDVKDNWDDEEEEKE). 2 disordered regions span residues 1–75 (MADS…DKIK) and 214–235 (KQKQEKEKKANKKKKKGVVPGG). Positions 30–127 (EGEDEEEDVK…EADMELAREA (98 aa)) form a coiled coil. The span at 51–75 (EEKKVEQKIAEVKPPEKKKLSDKIK) shows a compositional bias: basic and acidic residues.

This sequence belongs to the eIF-3 subunit J family. As to quaternary structure, component of the eukaryotic translation initiation factor 3 (eIF-3) complex, which is composed of 13 subunits: eif3a, eif3b, eif3c, eif3d, eif3e, eif3f, eif3g, eif3h, eif3i, eif3j, eif3k, eif3l and eif3m.

Its subcellular location is the cytoplasm. Functionally, component of the eukaryotic translation initiation factor 3 (eIF-3) complex, which is involved in protein synthesis of a specialized repertoire of mRNAs and, together with other initiation factors, stimulates binding of mRNA and methionyl-tRNAi to the 40S ribosome. The eIF-3 complex specifically targets and initiates translation of a subset of mRNAs involved in cell proliferation. In Danio rerio (Zebrafish), this protein is Eukaryotic translation initiation factor 3 subunit J-B (eif3jb).